Consider the following 1245-residue polypeptide: MATINELYPVPYNVLAHPIKEVDDPYSWSNLLKGIQEGWEEWGKTGQKKLFEDHLTIAWNLYKTGKLDYFALTKASISLIGFIPGAEAAVPFINMFVDFVWPKLFGANTEGKDQQLFNAIMDAVNKMVDNKFLSYNLSTLNKTIEGLQGNLGLFQNAIQVAICQGSTPERVNFDQNCTPCNPNQPCKDDLDRVASRFDTANSQFTQHLPEFKNPWSDENSTQEFKRTSVELTLPMYTTVATLHLLLYEGYIEFMTKWNFHNEQYLNNLKVELQQLIHSYSETVRTSFLQFLPTLNNRSKSSVNAYNRYVRNMTVNCLDIAATWPTFDTHNYHQGGKLDLTRIILSDTAGPIEEYTTGDKTSGPEHSNITPNNILDTPSPTYQHSFVSVDSIVYSRKELQQLDIATYSTNNSNNCHPYGLRLSYTDGSRYDYGDNQPDFTTSNNNYCHNSYTAPITLVNARHLYNAKGSLQNVESLVVSTVNGGSGSCICDAWINYLRPPQTSKNESRPDQKINVLYPITETVNKGTGGNLGVISAYVPMELVPENVIGDVNADTKLPLTQLKGFPFEKYGSEYNNRGISLVREWINGNNAVKLSNSQSVGIQITNQTKQKYEIRCRYASKGDNNVYFNVDLSENPFRNSISFGSTESSVVGVQGENGKYILKSITTVEIPAGSFYVHITNQGSSDLFLDRIEFVPKIQFQFCDNNNLHCDCNNPVDTDCTFCCVCTSLTDCDCNNPRGLDCTLCCQVENQLPSFVTLTDLQNITTQVNALVASSEHDTLATDVSDYEIEEVVLKVDALSGEVFGKEKKALRKLVNHTKRLSKARNLLIGGNFDNLDAWYRGRNVVNVSDHELFKSDHVLLPPPTLYSSYMFQKVEESKLKANTRYTVSGFIAHAEDLEIVVSRYGQEVKKVVQVPYGEAFPLTSRGAICCPPRSTSNGKPADPHFFSYSIDVGTLDVEANPGIELGLRIVERTGMARVSNLEIREDRPLKKNELRNVQRAARNWRTAYDQERAEVTALIQPVLNQINALYENEDWNGAIRSGVSYHDLEAIVLPTLPKLNHWFMSDMLGEQGSILAQFQEALDRAYTQLEESTILHNGHFTTDAANWTIEGDAHHAILEDGRRVLRLPDWSSSVSQTIEIENFDPDKEYQLVFHAQGEGTVSLQHGEEGEYVETHPHKSANFTTSHRQGVTFETNKVTVEITSEDGEFLVDHIALVEAPLPTDDQSSDGNTTSNTNSNTSMNNNQ.

Residues 1219-1245 (PLPTDDQSSDGNTTSNTNSNTSMNNNQ) are disordered. A compositionally biased stretch (low complexity) spans 1222 to 1245 (TDDQSSDGNTTSNTNSNTSMNNNQ).

This sequence belongs to the delta endotoxin family.

Functionally, promotes colloidosmotic lysis by binding to the midgut epithelial cells of hymenopteran species. The protein is Pesticidal crystal protein Cry5Ba (cry5Ba) of Bacillus thuringiensis.